A 388-amino-acid polypeptide reads, in one-letter code: Probable E3 ubiquitin-protein ligase LOG2 (388 aa).

A disordered region spans residues 1–43 (MGNISSSGGEGRRRRRRNHTAAPPPPPPPPSSSLPPPPLPTEI). Glycine 2 is lipidated: N-myristoyl glycine. The segment covering 22–40 (APPPPPPPPSSSLPPPPLP) has biased composition (pro residues). The segment at 159-281 (FTFDATVSGR…GEIKIRVVKQ (123 aa)) is DAR2 domain. An RING-type; atypical zinc finger spans residues 319–358 (CVICLSEPRDTTVLPCRHMCMCSGCAKVLRFQTNRCPICR). The disordered stretch occupies residues 368–388 (KVHGNNGSGNNTGQGETVEQE).

It belongs to the RING-type zinc finger family. LOG2 subfamily. Interacts with GDU1. Post-translationally, myristoylated (in vitro). In terms of tissue distribution, expressed in the vascular tissues in both phloem and xylem parenchyma cells.

Its subcellular location is the cell membrane. The catalysed reaction is S-ubiquitinyl-[E2 ubiquitin-conjugating enzyme]-L-cysteine + [acceptor protein]-L-lysine = [E2 ubiquitin-conjugating enzyme]-L-cysteine + N(6)-ubiquitinyl-[acceptor protein]-L-lysine.. The protein operates within protein modification; protein ubiquitination. Functionally, acts as an E3 ubiquitin-protein ligase, or as part of E3 complex, which accepts ubiquitin from specific E2 ubiquitin-conjugating enzymes and then transfers it to substrates (in vitro). Required for GLUTAMINE DUMPER 1(GDU1)-induced amino acid secretion and for amino acid homeostasis. Ubiquitinates GDU1 (in vitro). In Arabidopsis thaliana (Mouse-ear cress), this protein is Probable E3 ubiquitin-protein ligase LOG2 (LOG2).